Reading from the N-terminus, the 259-residue chain is 5'-nucleotidase SurE (259 aa).

Positions 8, 9, 40, and 92 each coordinate a divalent metal cation.

It belongs to the SurE nucleotidase family. The cofactor is a divalent metal cation.

It localises to the cytoplasm. The enzyme catalyses a ribonucleoside 5'-phosphate + H2O = a ribonucleoside + phosphate. Its function is as follows. Nucleotidase that shows phosphatase activity on nucleoside 5'-monophosphates. This is 5'-nucleotidase SurE from Xanthomonas oryzae pv. oryzae (strain MAFF 311018).